We begin with the raw amino-acid sequence, 220 residues long: UPF0758 protein ASA_4229 (220 aa).

The MPN domain maps to 95-220; that stretch reads EQLQRGDALT…TVSFAERGWL (126 aa). Residues H169, H171, and D182 each contribute to the Zn(2+) site. A JAMM motif motif is present at residues 169 to 182; that stretch reads HNHPSGVAEPSRAD.

This sequence belongs to the UPF0758 family.

This Aeromonas salmonicida (strain A449) protein is UPF0758 protein ASA_4229.